The following is a 205-amino-acid chain: High frequency lysogenization protein HflD homolog (205 aa).

It belongs to the HflD family.

The protein localises to the cytoplasm. It localises to the cell inner membrane. In Shewanella baltica (strain OS223), this protein is High frequency lysogenization protein HflD homolog.